The chain runs to 124 residues: Small ribosomal subunit protein uS12 (124 aa).

Positions 105-124 (SGVNDRRQGRSKYGAKRPKS) are disordered. Residues 113–124 (GRSKYGAKRPKS) are compositionally biased toward basic residues.

The protein belongs to the universal ribosomal protein uS12 family. Part of the 30S ribosomal subunit. Contacts proteins S8 and S17. May interact with IF1 in the 30S initiation complex.

With S4 and S5 plays an important role in translational accuracy. Its function is as follows. Interacts with and stabilizes bases of the 16S rRNA that are involved in tRNA selection in the A site and with the mRNA backbone. Located at the interface of the 30S and 50S subunits, it traverses the body of the 30S subunit contacting proteins on the other side and probably holding the rRNA structure together. The combined cluster of proteins S8, S12 and S17 appears to hold together the shoulder and platform of the 30S subunit. The sequence is that of Small ribosomal subunit protein uS12 from Idiomarina loihiensis (strain ATCC BAA-735 / DSM 15497 / L2-TR).